We begin with the raw amino-acid sequence, 134 residues long: Replication enhancer protein (134 aa).

This sequence belongs to the geminiviridae replication enhancer protein family. Homooligomer. Interacts with the replication-associated protein (REP). Interacts with host proliferating cell nuclear antigen (PCNA). Interacts with host retinoblastoma-related protein 1 (RBR1), and may thereby deregulate the host cell cycle. Oligomerization and interaction with PCNA are necessary for optimal replication enhancement.

Increases viral DNA accumulation. Enhances infectivity and symptom expression. In Tomato yellow leaf curl Sardinia virus (TYLCSV), this protein is Replication enhancer protein.